The chain runs to 159 residues: MADS-box transcription factor 23 (159 aa).

Positions 1-61 (MGRGKIEIKR…SRLYDFASSS (61 aa)) constitute an MADS-box domain. Residues 86 to 159 (AKLWQQEAAS…QELSRKVVTT (74 aa)) form the K-box domain.

Expressed in seedling roots and developing seeds.

It is found in the nucleus. Probable transcription factor. In Oryza sativa subsp. japonica (Rice), this protein is MADS-box transcription factor 23 (MADS23).